Here is a 649-residue protein sequence, read N- to C-terminus: Lipoteichoic acid synthase 2 (649 aa).

The Cytoplasmic segment spans residues 1–9 (MKTFIKERG). Residues 10 to 30 (LAFFLIAVVLLWIKTYVGYVL) traverse the membrane as a helical segment. Residues 31–42 (NFNLGIDNTIQK) lie on the Extracellular side of the membrane. The helical transmembrane segment at 43–63 (ILLFVNPLSSSLFFLGFGLLF) threads the bilayer. Over 64–69 (KKKLQQ) the chain is Cytoplasmic. The helical transmembrane segment at 70–90 (TAIIVIHFLMSFLLYANIVYY) threads the bilayer. Over 91–118 (RFFNDFITIPVIMQAKTNGGQLGDSAFS) the chain is Extracellular. Residues 119–139 (LMRPTDAFYFIDTIILIILAI) traverse the membrane as a helical segment. Over 140–151 (KVNKPAETSSKK) the chain is Cytoplasmic. The chain crosses the membrane as a helical span at residues 152-172 (SFRIIFASSILVFLINLAVAE). Topologically, residues 173 to 649 (SDRPELLTRS…SETSKDNEDK (477 aa)) are extracellular. The Mn(2+) site is built by Glu-253 and Thr-297. The active site involves Thr-297. Position 412 (His-412) interacts with substrate. Positions 471 and 472 each coordinate Mn(2+). The tract at residues 622 to 649 (FKKVNPSDYDYTKHDEDSSETSKDNEDK) is disordered. Over residues 631-649 (DYTKHDEDSSETSKDNEDK) the composition is skewed to basic and acidic residues.

It belongs to the LTA synthase family. In terms of processing, proteolytically cleaved.

It localises to the cell membrane. The protein localises to the secreted. Its pathway is cell wall biogenesis; lipoteichoic acid biosynthesis. Its function is as follows. Catalyzes the polymerization of lipoteichoic acid (LTA) polyglycerol phosphate, a reaction that presumably uses phosphatidylglycerol (PG) as substrate. This Bacillus subtilis (strain 168) protein is Lipoteichoic acid synthase 2 (ltaS2).